The chain runs to 204 residues: uncharacterized protein (204 aa).

Positions 1 to 21 (MIKKFLLFAMLNIFLTNKAHS) are cleaved as a signal peptide.

This is an uncharacterized protein from Borreliella burgdorferi (strain ATCC 35210 / DSM 4680 / CIP 102532 / B31) (Borrelia burgdorferi).